Here is a 658-residue protein sequence, read N- to C-terminus: Ubiquilin-3 (658 aa).

The Ubiquitin-like domain maps to 22 to 96 (IRVTVKTPKD…VHLVIKMQRR (75 aa)). The region spanning 194–233 (NPHMQHLIQQNPEIGHILNNPEIMRQTMEFLRNPSMMQEM) is the STI1 domain. Positions 280 to 291 (TATTASTTTTSS) are enriched in low complexity. 2 disordered regions span residues 280–336 (TATT…RNRL) and 362–478 (YLQG…PESP). Positions 312–323 (VSGGRQGRGGRQ) are enriched in gly residues. Composition is skewed to polar residues over residues 362–379 (YLQG…SPLS), 389–400 (SSPKSGSGQSLP), and 438–469 (TGPS…SLMS). The region spanning 614-658 (QLEAHFRVQLEQLRAMGFLNLEANLQALIATEGDVDAAVEKLRKS) is the UBA domain.

In terms of tissue distribution, testis-specific (at protein level).

The sequence is that of Ubiquilin-3 (Ubqln3) from Mus musculus (Mouse).